Consider the following 302-residue polypeptide: MAHATPQGVKLLNGWKRPGRFDKGLGAQLPEAYRKFWREWKLTTPAAVHYIPKEQQWERDEVTHAIKPVQNIPLPLIDTPESHRGIWGGEAVIKGFQKREQTKRRVPHFWVPNLRRSVVHSHVLDCYMSVVVTERTLEQIHECHGFDHYLLKNRACDLRSALALKLKREVLQALQNGVPALADEPERQQEVLKEYRRYLEPYTPEEIDWYGHTYLEAIRKLQKQLREAEKVVPHKLEFRGKLIEQLRQAGISEAGKLEKPDALAAESSVEHKDSDIEALTKLESSPSSSWLSKINPFGKKET.

It belongs to the bacterial ribosomal protein bL28 family. As to quaternary structure, component of the mitochondrial ribosome large subunit (39S) which comprises a 16S rRNA and about 50 distinct proteins.

Its subcellular location is the mitochondrion. This is Large ribosomal subunit protein bL28m (mRpL28) from Drosophila melanogaster (Fruit fly).